Here is a 161-residue protein sequence, read N- to C-terminus: MSLAQTLRGALLTDFMGAAWIAVREMFRRKATVNYPFEKNPLSPRFRGEHVLRRYPSGEERCIACKLCEAICPAQAITIEAEPREDGARRTTRYDIDMVKCIYCGFCQEACPVDAIVEGPNFEFATETREELFYDKERLLANGDRWERLIAKNLELDAPYR.

4Fe-4S ferredoxin-type domains are found at residues 53 to 82 (RRYP…IEAE) and 92 to 121 (TRYD…EGPN). 8 residues coordinate [4Fe-4S] cluster: C62, C65, C68, C72, C101, C104, C107, and C111.

It belongs to the complex I 23 kDa subunit family. As to quaternary structure, NDH-1 is composed of 14 different subunits. Subunits NuoA, H, J, K, L, M, N constitute the membrane sector of the complex. [4Fe-4S] cluster serves as cofactor.

Its subcellular location is the cell inner membrane. The catalysed reaction is a quinone + NADH + 5 H(+)(in) = a quinol + NAD(+) + 4 H(+)(out). In terms of biological role, NDH-1 shuttles electrons from NADH, via FMN and iron-sulfur (Fe-S) centers, to quinones in the respiratory chain. The immediate electron acceptor for the enzyme in this species is believed to be ubiquinone. Couples the redox reaction to proton translocation (for every two electrons transferred, four hydrogen ions are translocated across the cytoplasmic membrane), and thus conserves the redox energy in a proton gradient. In Hyphomonas neptunium (strain ATCC 15444), this protein is NADH-quinone oxidoreductase subunit I.